A 432-amino-acid chain; its full sequence is MAGQTIIVSGLNPAAILQSTIGGGASPTAAAAENGTRKVIPLSRDALQDFMLSIITQKLQDEKQPFYVLDLGEVVSLIDQWKSALPNIRPFYAVKCNPEPSFLSILSAMGSNFDCASRAEIEYVLSLGISPDRIVFANPCKPESDIIFAAKVGVNLTTYDSEDEVYKIRKHHPKSELLLRIKPMFDGNARCPMGPKYGALPEEVEPLLRAAQAARLTVSGVSFHIGSGDADSNAYLGAIAAAKEVFETAAKLGMSKMTVLDVGGGFTSGHQFTTAAVAVRSALKQHFDDQPELTIIAEPGRFFAETAFTLATTIIGKRVRGELREYWINDGLYGSMNCVLYDHATVNATPLAVLSNRTNVTCGGSKTFPTTVFGPTCDALDTVLRDYQLPELQVNDWLVFPNMGAYTKAAGSNFNGFNTSAIVTHLAYAYPS.

An N6-(pyridoxal phosphate)lysine modification is found at Lys95. Residues Ser227, Gly265, and Glu298–Arg301 each bind pyridoxal 5'-phosphate. Tyr341–Asp342 contacts substrate. Cys377 acts as the Proton donor; shared with dimeric partner in catalysis. Asp378 serves as a coordination point for substrate. Pyridoxal 5'-phosphate is bound at residue Tyr406.

It belongs to the Orn/Lys/Arg decarboxylase class-II family. Homodimer. Only the dimer is catalytically active, as the active sites are constructed of residues from both monomers. Pyridoxal 5'-phosphate is required as a cofactor.

It is found in the plastid. The protein resides in the chloroplast. It catalyses the reaction L-ornithine + H(+) = putrescine + CO2. Its pathway is alkaloid biosynthesis; nicotine biosynthesis. It functions in the pathway amine and polyamine biosynthesis; putrescine biosynthesis via L-ornithine pathway; putrescine from L-ornithine: step 1/1. Its function is as follows. Involved in the biosynthesis of pyridine alkaloid natural products, leading mainly to the production of anabasine, anatabine, nicotine and nornicotine, effective deterrents against herbivores with antiparasitic and pesticide properties (neurotoxins); nornicotine serves as the precursor in the synthesis of the carcinogen compound N'-nitrosonornicotine (NNN). Catalyzes the first and rate-limiting step of polyamine biosynthesis that converts ornithine into putrescine, which is the precursor for the polyamines, spermidine and spermine. Polyamines are essential for cell proliferation and are implicated in cellular processes, ranging from DNA replication to apoptosis. The chain is Ornithine decarboxylase 1A, chloroplastic from Nicotiana tabacum (Common tobacco).